A 117-amino-acid chain; its full sequence is UPF0251 protein DET0218 (117 aa).

This sequence belongs to the UPF0251 family.

The protein is UPF0251 protein DET0218 of Dehalococcoides mccartyi (strain ATCC BAA-2266 / KCTC 15142 / 195) (Dehalococcoides ethenogenes (strain 195)).